The chain runs to 147 residues: Globin, polymeric component P2 (147 aa).

The region spanning 2 to 146 (PLTADQVAAL…ISDALVAGLE (145 aa)) is the Globin domain. Residue histidine 96 participates in heme b binding.

Belongs to the globin family. In terms of assembly, polymer.

In Glycera dibranchiata (Bloodworm), this protein is Globin, polymeric component P2.